The primary structure comprises 130 residues: Small ribosomal subunit protein uS11 (130 aa).

A disordered region spans residues 109-130 (EDVTPIPHDGTGRPGGKRGRRV).

The protein belongs to the universal ribosomal protein uS11 family. Part of the 30S ribosomal subunit.

Functionally, located on the platform of the 30S subunit. The polypeptide is Small ribosomal subunit protein uS11 (Methanosphaera stadtmanae (strain ATCC 43021 / DSM 3091 / JCM 11832 / MCB-3)).